An 837-amino-acid chain; its full sequence is Outer membrane usher protein HifC (837 aa).

An N-terminal signal peptide occupies residues 1-26 (MKTKNFPLNKIAFACTLLLANPVAWA). The cysteines at positions 813 and 833 are disulfide-linked.

This sequence belongs to the fimbrial export usher family.

It localises to the cell outer membrane. Its function is as follows. Essential for piliation. The polypeptide is Outer membrane usher protein HifC (hifC) (Haemophilus influenzae).